Reading from the N-terminus, the 264-residue chain is MTKFSSFSLFFLIVGAYMTHVCFNMEIIGGKEVSPHSRPFMASIQYGGHHVCGGVLIDPQWVLTAAHCQYRFTKGQSPTVVLGAHSLSKNEASKQTLEIKKFIPFSRVTSDPQSNDIMLVKLQTAAKLNKHVKMLHIRSKTSLRSGTKCKVTGWGATDPDSLRPSDTLREVTVTVLSRKLCNSQSYYNGDPFITKDMVCAGDAKGQKDSCKGDSGGPLICKGVFHAIVSGGHECGVATKPGIYTLLTKKYQTWIKSNLVPPHTN.

Positions 1 to 24 are cleaved as a signal peptide; that stretch reads MTKFSSFSLFFLIVGAYMTHVCFN. Positions 25–26 are cleaved as a propeptide — activation peptide; the sequence is ME. Residues 27–259 form the Peptidase S1 domain; the sequence is IIGGKEVSPH…YQTWIKSNLV (233 aa). A disulfide bridge links cysteine 52 with cysteine 68. Active-site charge relay system residues include histidine 67 and aspartate 116. Cystine bridges form between cysteine 149–cysteine 220, cysteine 181–cysteine 199, and cysteine 210–cysteine 234. The Charge relay system role is filled by serine 214.

Belongs to the peptidase S1 family. Granzyme subfamily. In terms of tissue distribution, expressed in lung, spleen, thymus and peripheral blood leukocytes.

Its subcellular location is the secreted. The protein resides in the cytoplasmic granule. In Homo sapiens (Human), this protein is Granzyme K (GZMK).